Reading from the N-terminus, the 178-residue chain is uncharacterized protein (178 aa).

This is an uncharacterized protein from Cestrum parqui (CmYLCV).